The sequence spans 299 residues: GTPase Era (299 aa).

Positions Lys-4–Glu-171 constitute an Era-type G domain. A G1 region spans residues Gly-12 to Ser-19. Gly-12 to Ser-19 is a binding site for GTP. The segment at Xaa-38–Asn-42 is G2. A G3 region spans residues Asp-59–Gly-62. GTP is bound by residues Asp-59–Ile-63 and Asn-121–Asp-124. The segment at Asn-121–Asp-124 is G4. The tract at residues Ile-150–Ala-152 is G5. The KH type-2 domain occupies Thr-202 to Lys-280.

The protein belongs to the TRAFAC class TrmE-Era-EngA-EngB-Septin-like GTPase superfamily. Era GTPase family. In terms of assembly, monomer.

It localises to the cytoplasm. Its subcellular location is the cell membrane. In terms of biological role, an essential GTPase that binds both GDP and GTP, with rapid nucleotide exchange. Plays a role in 16S rRNA processing and 30S ribosomal subunit biogenesis and possibly also in cell cycle regulation and energy metabolism. The sequence is that of GTPase Era from Streptococcus pneumoniae serotype 19F (strain G54).